The following is a 348-amino-acid chain: Beta-hexosaminidase (348 aa).

Substrate contacts are provided by residues Asp-64, Arg-72, Arg-138, and 168–169; that span reads KH. His-181 functions as the Proton donor/acceptor in the catalytic mechanism. Asp-252 serves as the catalytic Nucleophile.

Belongs to the glycosyl hydrolase 3 family. NagZ subfamily.

It is found in the cytoplasm. It catalyses the reaction Hydrolysis of terminal non-reducing N-acetyl-D-hexosamine residues in N-acetyl-beta-D-hexosaminides.. Its pathway is cell wall biogenesis; peptidoglycan recycling. Plays a role in peptidoglycan recycling by cleaving the terminal beta-1,4-linked N-acetylglucosamine (GlcNAc) from peptide-linked peptidoglycan fragments, giving rise to free GlcNAc, anhydro-N-acetylmuramic acid and anhydro-N-acetylmuramic acid-linked peptides. In Nitrosomonas eutropha (strain DSM 101675 / C91 / Nm57), this protein is Beta-hexosaminidase.